The sequence spans 846 residues: Protein kintoun (846 aa).

Disordered stretches follow at residues 1–21 (MSTA…ERAD), 372–416 (YLSR…PALT), 581–657 (HTSI…DSTI), and 743–846 (HDSS…DDEI). Ser378 is modified (phosphoserine). Acidic residues predominate over residues 389-403 (PVEDDADGDMPETPE). Composition is skewed to basic residues over residues 596–612 (LHKK…KKQR) and 750–766 (QRKK…RAQQ). Ser770 is subject to Phosphoserine. The segment covering 821–832 (TRQDHADADAKN) has biased composition (basic and acidic residues).

Belongs to the PIH1 family. Kintoun subfamily. In terms of assembly, interacts with Pp1alpha-96A, Pp1-87B, Pp1-13C and flw.

It localises to the cytoplasm. In terms of biological role, required for cytoplasmic pre-assembly of axonemal dyneins, thereby playing a central role in motility in cilia and flagella. Involved in pre-assembly of dynein arm complexes in the cytoplasm before intraflagellar transport loads them for the ciliary compartment. In Drosophila persimilis (Fruit fly), this protein is Protein kintoun.